The primary structure comprises 291 residues: Taste receptor type 2 member 16 (291 aa).

A topological domain (extracellular) is located at residue M1. A helical membrane pass occupies residues 2–22 (IPIQLTVFFMIIYVLESLTII). Topologically, residues 23–41 (VQSSLIVAVLGREWLQVRR) are cytoplasmic. The chain crosses the membrane as a helical span at residues 42 to 62 (LMPVDMILISLGISRFCLQWA). Residues 63–84 (SMLNNFCSYFNLNYVLCNLTIT) lie on the Extracellular side of the membrane. N-linked (GlcNAc...) asparagine glycosylation occurs at N80. Residues 85–105 (WEFFNILTFWLNSLLTVFYCI) form a helical membrane-spanning segment. Residues 106-125 (KVSSFTHHIFLWLRWRILRL) are Cytoplasmic-facing. The helical transmembrane segment at 126–146 (FPWILLGSLMITCVTIIPSAI) threads the bilayer. At 147–182 (GNYIQIQLLTMEHLPRNSTVTDKLENFHQYQFQAHT) the chain is on the extracellular side. Residue N163 is glycosylated (N-linked (GlcNAc...) asparagine). The helical transmembrane segment at 183-203 (VALVIPFILFLASTIFLMASL) threads the bilayer. Over 204 to 228 (TKQIQHHSTGHCNPSMKARFTALRS) the chain is Cytoplasmic. Residues 229–249 (LAVLFIVFTSYFLTILITIIG) form a helical membrane-spanning segment. Residues 250 to 257 (TLFDKRCW) lie on the Extracellular side of the membrane. A helical membrane pass occupies residues 258–278 (LWVWEAFVYAFILMHSTSLML). Residues 279–291 (SSPTLKRILKGKC) lie on the Cytoplasmic side of the membrane.

This sequence belongs to the G-protein coupled receptor T2R family. As to quaternary structure, interacts with RTP3 and RTP4. As to expression, expressed in a subset of gustducin-positive taste receptor cells of the tongue. Expressed in circumvallate papillae and testis.

The protein resides in the cell membrane. Functionally, gustducin-coupled receptor implicated in the perception of bitter compounds in the oral cavity and the gastrointestinal tract. Signals through PLCB2 and the calcium-regulated cation channel TRPM5. The protein is Taste receptor type 2 member 16 (TAS2R16) of Homo sapiens (Human).